A 160-amino-acid chain; its full sequence is MTKKKAYKPGSATIAQNKRARHEYSIEEEFEAGLVLQGWEVKSLRAGKANLSDSYVTFMNGEAYLFGATITPLNVASSHVVCDPIRTRKLLLNKREMDSLFGRVSRDGYTVVALSMYWKNAWSKVKIGVAKGKKDHDKRDDIKEREWKLDKARIMKNANR.

This sequence belongs to the SmpB family.

Its subcellular location is the cytoplasm. Required for rescue of stalled ribosomes mediated by trans-translation. Binds to transfer-messenger RNA (tmRNA), required for stable association of tmRNA with ribosomes. tmRNA and SmpB together mimic tRNA shape, replacing the anticodon stem-loop with SmpB. tmRNA is encoded by the ssrA gene; the 2 termini fold to resemble tRNA(Ala) and it encodes a 'tag peptide', a short internal open reading frame. During trans-translation Ala-aminoacylated tmRNA acts like a tRNA, entering the A-site of stalled ribosomes, displacing the stalled mRNA. The ribosome then switches to translate the ORF on the tmRNA; the nascent peptide is terminated with the 'tag peptide' encoded by the tmRNA and targeted for degradation. The ribosome is freed to recommence translation, which seems to be the essential function of trans-translation. This chain is SsrA-binding protein, found in Pectobacterium atrosepticum (strain SCRI 1043 / ATCC BAA-672) (Erwinia carotovora subsp. atroseptica).